The following is a 478-amino-acid chain: Phenylalanine--tRNA ligase alpha subunit (478 aa).

L-phenylalanine contacts are provided by residues threonine 318, 357–359 (QLE), and tyrosine 397. A Mg(2+)-binding site is contributed by glutamate 399. Phenylalanine 422 is a binding site for L-phenylalanine.

This sequence belongs to the class-II aminoacyl-tRNA synthetase family. Phe-tRNA synthetase alpha subunit type 2 subfamily. As to quaternary structure, tetramer of two alpha and two beta subunits. It depends on Mg(2+) as a cofactor.

The protein localises to the cytoplasm. It catalyses the reaction tRNA(Phe) + L-phenylalanine + ATP = L-phenylalanyl-tRNA(Phe) + AMP + diphosphate + H(+). This chain is Phenylalanine--tRNA ligase alpha subunit, found in Methanospirillum hungatei JF-1 (strain ATCC 27890 / DSM 864 / NBRC 100397 / JF-1).